Here is a 107-residue protein sequence, read N- to C-terminus: U1-lycotoxin-Ls1b (107 aa).

The first 20 residues, 1 to 20 (MMKVLVVVALLPTLISYSSS), serve as a signal peptide directing secretion. A propeptide spanning residues 21-41 (EGIDDLEADELLSLMANEQTR) is cleaved from the precursor. 4 disulfides stabilise this stretch: Cys-44–Cys-59, Cys-51–Cys-68, Cys-58–Cys-86, and Cys-70–Cys-84.

It belongs to the neurotoxin 19 (CSTX) family. 04 (U1-Lctx) subfamily. In terms of tissue distribution, expressed by the venom gland.

It localises to the secreted. The sequence is that of U1-lycotoxin-Ls1b from Lycosa singoriensis (Wolf spider).